Consider the following 260-residue polypeptide: Type III pantothenate kinase (260 aa).

6 to 13 contributes to the ATP binding site; sequence DSGNTNIV. Residue 108-111 participates in substrate binding; that stretch reads GADR. Catalysis depends on D110, which acts as the Proton acceptor. A K(+)-binding site is contributed by D130. Residue T133 coordinates ATP. T185 is a binding site for substrate.

Belongs to the type III pantothenate kinase family. Homodimer. NH4(+) is required as a cofactor. It depends on K(+) as a cofactor.

It is found in the cytoplasm. The catalysed reaction is (R)-pantothenate + ATP = (R)-4'-phosphopantothenate + ADP + H(+). It functions in the pathway cofactor biosynthesis; coenzyme A biosynthesis; CoA from (R)-pantothenate: step 1/5. Its function is as follows. Catalyzes the phosphorylation of pantothenate (Pan), the first step in CoA biosynthesis. This is Type III pantothenate kinase from Paramagnetospirillum magneticum (strain ATCC 700264 / AMB-1) (Magnetospirillum magneticum).